Consider the following 887-residue polypeptide: Golgin IMH1 (887 aa).

Disordered stretches follow at residues 16-50 (LAKG…EELP), 142-214 (QESL…MKSQ), 240-301 (GASQ…SAGD), and 783-822 (LKMS…SISS). Composition is skewed to basic and acidic residues over residues 37 to 50 (GRRE…EELP) and 145 to 210 (LEQR…HAAE). Residues 118–241 (AMLTEEIKRI…YKSTIQELGA (124 aa)) are a coiled coil. Residues 240–254 (GASQATGEAQPSSEA) are compositionally biased toward polar residues. Basic residues predominate over residues 258 to 273 (RGKKGKGKRGKGKKRV). Positions 299 to 788 (AGDEIIEAIE…LSTQLKMSKD (490 aa)) form a coiled coil. A compositionally biased stretch (low complexity) spans 788-807 (DMSSQSRHSSRSGSLVSPSS). Positions 808 to 822 (DNETGNSPRKISISS) are enriched in polar residues. The GRIP domain occupies 837 to 885 (EMESNEKLAYIRNVLLGFLEHREQRSQLLPVVSTLLQLSSHDEKRLLTS).

It localises to the cytoplasm. It is found in the golgi apparatus membrane. In terms of biological role, involved in vesicular transport between an endosomal compartment and the Golgi apparatus. The polypeptide is Golgin IMH1 (IMH1) (Eremothecium gossypii (strain ATCC 10895 / CBS 109.51 / FGSC 9923 / NRRL Y-1056) (Yeast)).